We begin with the raw amino-acid sequence, 413 residues long: Azaphilone biosynthesis cluster protein M (413 aa).

The span at 123-138 (STQPDQVQPNQPTPSF) shows a compositional bias: polar residues. The tract at residues 123-145 (STQPDQVQPNQPTPSFESAAGAS) is disordered.

Its pathway is secondary metabolite biosynthesis. Its function is as follows. Part of the gene cluster that mediates the biosynthesis of azaterrilone A and other azaphilones, a class of fungal metabolites characterized by a highly oxygenated pyrano-quinone bicyclic core and exhibiting a broad range of bioactivities. The first step of the pathway begins with the non-reducing polyketide synthase tazA that assembles one acetyl-CoA starter unit, five malonyl-CoA units, and catalyzes a series of Claisen condensations, methylation, PT-mediated cyclization, and finally releases the first hexaketide precursor through the R-domain. The tazA product then undergoes reduction on its terminal ketone and the following pyran-ring formation by yet undetermined enzyme(s). Dehydration and enoyl reduction, possibly involving the trans-enoyl reductase tazE leads to the next intermediate. TazD is predicted as an acetyltransferase and might catalyze the acetylation steps leading to the synthesis of azaterrilone A. Azaterrilone A is not the final product of the taz pathway and both the highly reducing polyketide synthase tazB and the dual enzyme tazHJ catalyze late steps of the pathway, leading to the production of the 2 final stereoisomers that contain additional polyketide modification whose structures have still to be determined. The chain is Azaphilone biosynthesis cluster protein M from Aspergillus terreus (strain NIH 2624 / FGSC A1156).